Reading from the N-terminus, the 141-residue chain is MALTIHCNIVSAEQEIFSGLVELLVAAATEGDVGIGYGHAPFLSALKPGPVRVKKQSGDEEIFYVSGGYLEVQPESINVLADTALRADDMDEASAEAAKKEAEEALASQTGDGIDYSKAAARLAEAAAQLRTLQAIRKRAR.

It belongs to the ATPase epsilon chain family. As to quaternary structure, F-type ATPases have 2 components, CF(1) - the catalytic core - and CF(0) - the membrane proton channel. CF(1) has five subunits: alpha(3), beta(3), gamma(1), delta(1), epsilon(1). CF(0) has three main subunits: a, b and c.

Its subcellular location is the cell inner membrane. Functionally, produces ATP from ADP in the presence of a proton gradient across the membrane. In Teredinibacter turnerae (strain ATCC 39867 / T7901), this protein is ATP synthase epsilon chain.